Here is a 540-residue protein sequence, read N- to C-terminus: MKLLGLVFLLFNLFMFSFSRKLLTESGGGLHDEAALLKLKSSFLDPNGVLSSWVSDSSSNHCSWYGVSCNSDSRVVSLILRGCDELEGSGVLHLPDLSSCSSSKRRLGGVISPVVGDLSEIRVLSLSFNDLRGEIPKEIWGLEKLEILDLKGNNFIGGIRVVDNVVLRKLMSFEDEDEIGPSSADDDSPGKSGLYPIEIASIVSASVIVFVLLVLVILFIYTRKWKRNSQVQVDEIKEIKVFVDIGIPLTYEIIVRATGYFSNSNCIGHGGFGSTYKAEVSPTNVFAVKRLSVGRFQGDQQFHAEISALEMVRHPNLVMLIGYHASETEMFLIYNYLSGGNLQDFIKERSKAAIEWKVLHKIALDVARALSYLHEQCSPKVLHRDIKPSNILLDNNYNAYLSDFGLSKLLGTSQSHVTTGVAGTFGYVAPEYAMTCRVSEKADVYSYGIVLLELISDKRALDPSFSSHENGFNIVSWAHMMLSQGKAKEVFTTGLWETGPPDDLVEVLHLALKCTVDSLSIRPTMKQAVRLLKRIQPSRL.

Positions 1–19 (MKLLGLVFLLFNLFMFSFS) are cleaved as a signal peptide. Residues 20 to 198 (RKLLTESGGG…PGKSGLYPIE (179 aa)) are Extracellular-facing. LRR repeat units follow at residues 118-142 (LSEI…IWGL) and 144-169 (KLEI…VLRK). A helical transmembrane segment spans residues 199 to 219 (IASIVSASVIVFVLLVLVILF). Residues 220–540 (IYTRKWKRNS…LLKRIQPSRL (321 aa)) lie on the Cytoplasmic side of the membrane. Thr250 and Thr258 each carry phosphothreonine. The region spanning 261 to 535 (FSNSNCIGHG…KQAVRLLKRI (275 aa)) is the Protein kinase domain. ATP contacts are provided by residues 267 to 275 (IGHGGFGST) and Lys289. A phosphotyrosine mark is found at Tyr334 and Tyr372. Asp385 functions as the Proton acceptor in the catalytic mechanism. Tyr427 is subject to Phosphotyrosine. Residue Thr435 is modified to Phosphothreonine.

It belongs to the protein kinase superfamily. Ser/Thr protein kinase family. As to expression, expressed in roots, stems, leaves, and flowers.

Its subcellular location is the cell membrane. It carries out the reaction L-seryl-[protein] + ATP = O-phospho-L-seryl-[protein] + ADP + H(+). The enzyme catalyses L-threonyl-[protein] + ATP = O-phospho-L-threonyl-[protein] + ADP + H(+). Its function is as follows. Involved in the main abscisic acid-mediated (ABA) signaling pathway and in early ABA perception. Together with RPK2, required for pattern formation along the radial axis (e.g. the apical embryonic domain cell types that generate cotyledon primordia), and the apical-basal axis (e.g. differentiation of the basal pole during early embryogenesis). In Arabidopsis thaliana (Mouse-ear cress), this protein is Probable LRR receptor-like serine/threonine-protein kinase RPK1 (RPK1).